The following is a 133-amino-acid chain: Ribosome-binding factor A (133 aa).

It belongs to the RbfA family. As to quaternary structure, monomer. Binds 30S ribosomal subunits, but not 50S ribosomal subunits or 70S ribosomes.

Its subcellular location is the cytoplasm. Functionally, one of several proteins that assist in the late maturation steps of the functional core of the 30S ribosomal subunit. Associates with free 30S ribosomal subunits (but not with 30S subunits that are part of 70S ribosomes or polysomes). Required for efficient processing of 16S rRNA. May interact with the 5'-terminal helix region of 16S rRNA. This chain is Ribosome-binding factor A, found in Nostoc sp. (strain PCC 7120 / SAG 25.82 / UTEX 2576).